A 179-amino-acid chain; its full sequence is Large ribosomal subunit protein uL5 (179 aa).

The protein belongs to the universal ribosomal protein uL5 family. In terms of assembly, part of the 50S ribosomal subunit; part of the 5S rRNA/L5/L18/L25 subcomplex. Contacts the 5S rRNA and the P site tRNA. Forms a bridge to the 30S subunit in the 70S ribosome.

This is one of the proteins that bind and probably mediate the attachment of the 5S RNA into the large ribosomal subunit, where it forms part of the central protuberance. In the 70S ribosome it contacts protein S13 of the 30S subunit (bridge B1b), connecting the 2 subunits; this bridge is implicated in subunit movement. Contacts the P site tRNA; the 5S rRNA and some of its associated proteins might help stabilize positioning of ribosome-bound tRNAs. The sequence is that of Large ribosomal subunit protein uL5 from Lawsonia intracellularis (strain PHE/MN1-00).